Reading from the N-terminus, the 462-residue chain is Cysteine--tRNA ligase (462 aa).

A Zn(2+)-binding site is contributed by cysteine 28. The 'HIGH' region motif lies at 30–40 (MTVYDYCHIGH). 3 residues coordinate Zn(2+): cysteine 209, histidine 234, and glutamate 238. Residues 266-270 (KMSKS) carry the 'KMSKS' region motif. Residue lysine 269 coordinates ATP.

It belongs to the class-I aminoacyl-tRNA synthetase family. In terms of assembly, monomer. Zn(2+) serves as cofactor.

The protein resides in the cytoplasm. It carries out the reaction tRNA(Cys) + L-cysteine + ATP = L-cysteinyl-tRNA(Cys) + AMP + diphosphate. This Pseudomonas fluorescens (strain SBW25) protein is Cysteine--tRNA ligase.